Consider the following 195-residue polypeptide: Imidazoleglycerol-phosphate dehydratase (195 aa).

It belongs to the imidazoleglycerol-phosphate dehydratase family.

The protein localises to the cytoplasm. It catalyses the reaction D-erythro-1-(imidazol-4-yl)glycerol 3-phosphate = 3-(imidazol-4-yl)-2-oxopropyl phosphate + H2O. Its pathway is amino-acid biosynthesis; L-histidine biosynthesis; L-histidine from 5-phospho-alpha-D-ribose 1-diphosphate: step 6/9. The polypeptide is Imidazoleglycerol-phosphate dehydratase (Burkholderia vietnamiensis (strain G4 / LMG 22486) (Burkholderia cepacia (strain R1808))).